We begin with the raw amino-acid sequence, 257 residues long: Ribonuclease HII (257 aa).

The region spanning 72–257 is the RNase H type-2 domain; that stretch reads TYIAGIDEVG…FAPIKDMIQK (186 aa). A divalent metal cation-binding residues include aspartate 78, glutamate 79, and aspartate 170.

The protein belongs to the RNase HII family. Mn(2+) serves as cofactor. It depends on Mg(2+) as a cofactor.

The protein resides in the cytoplasm. The enzyme catalyses Endonucleolytic cleavage to 5'-phosphomonoester.. Functionally, endonuclease that specifically degrades the RNA of RNA-DNA hybrids. In Bacillus cereus (strain ATCC 14579 / DSM 31 / CCUG 7414 / JCM 2152 / NBRC 15305 / NCIMB 9373 / NCTC 2599 / NRRL B-3711), this protein is Ribonuclease HII.